The sequence spans 49 residues: Photosystem II reaction center protein K (49 aa).

Positions 1 to 12 (MISSIHLRKLLG) are excised as a propeptide. The chain crosses the membrane as a helical span at residues 24-44 (IIDVLPIIPVLFLLLAFVWQA).

This sequence belongs to the PsbK family. As to quaternary structure, PSII is composed of 1 copy each of membrane proteins PsbA, PsbB, PsbC, PsbD, PsbE, PsbF, PsbH, PsbI, PsbJ, PsbK, PsbL, PsbM, PsbT, PsbX, PsbY, PsbZ, Psb30/Ycf12, at least 3 peripheral proteins of the oxygen-evolving complex and a large number of cofactors. It forms dimeric complexes.

The protein localises to the plastid. The protein resides in the chloroplast thylakoid membrane. Its function is as follows. One of the components of the core complex of photosystem II (PSII). PSII is a light-driven water:plastoquinone oxidoreductase that uses light energy to abstract electrons from H(2)O, generating O(2) and a proton gradient subsequently used for ATP formation. It consists of a core antenna complex that captures photons, and an electron transfer chain that converts photonic excitation into a charge separation. The protein is Photosystem II reaction center protein K of Phacus acuminatus.